The following is a 123-amino-acid chain: UPF0231 protein plu3616 (123 aa).

Belongs to the UPF0231 family.

In Photorhabdus laumondii subsp. laumondii (strain DSM 15139 / CIP 105565 / TT01) (Photorhabdus luminescens subsp. laumondii), this protein is UPF0231 protein plu3616.